Reading from the N-terminus, the 100-residue chain is Small ribosomal subunit protein bS20 (100 aa).

Belongs to the bacterial ribosomal protein bS20 family.

Functionally, binds directly to 16S ribosomal RNA. This is Small ribosomal subunit protein bS20 from Prochlorococcus marinus (strain MIT 9211).